Consider the following 79-residue polypeptide: Probable [Fe-S]-dependent transcriptional repressor (79 aa).

Iron-sulfur cluster is bound by residues cysteine 54, cysteine 59, cysteine 62, and cysteine 68.

This sequence belongs to the FeoC family.

May function as a transcriptional regulator that controls feoABC expression. The polypeptide is Probable [Fe-S]-dependent transcriptional repressor (Photorhabdus laumondii subsp. laumondii (strain DSM 15139 / CIP 105565 / TT01) (Photorhabdus luminescens subsp. laumondii)).